A 214-amino-acid chain; its full sequence is tRNA (guanine-N(7)-)-methyltransferase (214 aa).

Glutamate 43, glutamate 68, asparagine 99, and aspartate 121 together coordinate S-adenosyl-L-methionine. The active site involves aspartate 121. Substrate is bound by residues lysine 125, aspartate 157, and 194–197 (TEYE).

It belongs to the class I-like SAM-binding methyltransferase superfamily. TrmB family.

It catalyses the reaction guanosine(46) in tRNA + S-adenosyl-L-methionine = N(7)-methylguanosine(46) in tRNA + S-adenosyl-L-homocysteine. Its pathway is tRNA modification; N(7)-methylguanine-tRNA biosynthesis. Its function is as follows. Catalyzes the formation of N(7)-methylguanine at position 46 (m7G46) in tRNA. This chain is tRNA (guanine-N(7)-)-methyltransferase, found in Alkaliphilus metalliredigens (strain QYMF).